The following is a 201-amino-acid chain: ATP-dependent Clp protease proteolytic subunit (201 aa).

The active-site Nucleophile is S98. H123 is a catalytic residue.

The protein belongs to the peptidase S14 family. Fourteen ClpP subunits assemble into 2 heptameric rings which stack back to back to give a disk-like structure with a central cavity, resembling the structure of eukaryotic proteasomes.

Its subcellular location is the cytoplasm. It catalyses the reaction Hydrolysis of proteins to small peptides in the presence of ATP and magnesium. alpha-casein is the usual test substrate. In the absence of ATP, only oligopeptides shorter than five residues are hydrolyzed (such as succinyl-Leu-Tyr-|-NHMec, and Leu-Tyr-Leu-|-Tyr-Trp, in which cleavage of the -Tyr-|-Leu- and -Tyr-|-Trp bonds also occurs).. Functionally, cleaves peptides in various proteins in a process that requires ATP hydrolysis. Has a chymotrypsin-like activity. Plays a major role in the degradation of misfolded proteins. This is ATP-dependent Clp protease proteolytic subunit from Rickettsia canadensis (strain McKiel).